A 72-amino-acid chain; its full sequence is MAKEGAIEVEGRIIEPLPNAMFRVELDNGHKVLAHISGKMRQHYIRILPEDRVVVELSPYDLTRGRIVYRYK.

The region spanning 1-72 (MAKEGAIEVE…TRGRIVYRYK (72 aa)) is the S1-like domain.

Belongs to the IF-1 family. As to quaternary structure, component of the 30S ribosomal translation pre-initiation complex which assembles on the 30S ribosome in the order IF-2 and IF-3, IF-1 and N-formylmethionyl-tRNA(fMet); mRNA recruitment can occur at any time during PIC assembly.

The protein resides in the cytoplasm. Its function is as follows. One of the essential components for the initiation of protein synthesis. Stabilizes the binding of IF-2 and IF-3 on the 30S subunit to which N-formylmethionyl-tRNA(fMet) subsequently binds. Helps modulate mRNA selection, yielding the 30S pre-initiation complex (PIC). Upon addition of the 50S ribosomal subunit IF-1, IF-2 and IF-3 are released leaving the mature 70S translation initiation complex. In Corynebacterium diphtheriae (strain ATCC 700971 / NCTC 13129 / Biotype gravis), this protein is Translation initiation factor IF-1.